The primary structure comprises 787 residues: Exocyst complex component SEC15B (787 aa).

Belongs to the SEC15 family. As to quaternary structure, the exocyst complex is composed of SEC3, SEC5, SEC6, SEC8, SEC10, EXO70A1 and EXO84B. Interacts with EXO84B. Binds to EXO70H1 AND EXO70B2. Binds directly to B1L.

The protein localises to the cytoplasm. Its subcellular location is the cytosol. It localises to the cytoskeleton. It is found in the phragmoplast. The protein resides in the secreted. The protein localises to the cell wall. Its subcellular location is the extracellular exosome. Functionally, component of the exocyst complex involved in the docking of exocytic vesicles with fusion sites on the plasma membrane during regulated or polarized secretion. Involved in polarized cell growth and organ morphogenesis. During cytokinesis, involved in cell plate initiation, cell plate maturation and formation of new primary cell wall. This is Exocyst complex component SEC15B from Arabidopsis thaliana (Mouse-ear cress).